The chain runs to 282 residues: 2-dehydro-3-deoxyphosphooctonate aldolase (282 aa).

Belongs to the KdsA family.

The protein localises to the cytoplasm. It catalyses the reaction D-arabinose 5-phosphate + phosphoenolpyruvate + H2O = 3-deoxy-alpha-D-manno-2-octulosonate-8-phosphate + phosphate. The protein operates within carbohydrate biosynthesis; 3-deoxy-D-manno-octulosonate biosynthesis; 3-deoxy-D-manno-octulosonate from D-ribulose 5-phosphate: step 2/3. It participates in bacterial outer membrane biogenesis; lipopolysaccharide biosynthesis. The sequence is that of 2-dehydro-3-deoxyphosphooctonate aldolase from Agrobacterium fabrum (strain C58 / ATCC 33970) (Agrobacterium tumefaciens (strain C58)).